The chain runs to 286 residues: Protein Bride of doubletime (286 aa).

As to quaternary structure, interacts with dco (via nuclear localization signal). Interacts with Ankrd49; interaction promotes the stability of both complex members.

The protein resides in the cytoplasm. It localises to the cytosol. Its subcellular location is the cell membrane. Functions in planar polarity establishment and circadian rhythms by promoting the activity and localization of dco/dbt. Required for regulating the levels of dco/dbt and per in the nuclei of photoreceptor cells and thereby is involved in normal oscillations of the circadian clock proteins in the eye. In the dark, the cry circadian and rhodopsin visual pathways, activate the accumulation of the protein into Arr1- and Arr2-dependent cytosolic foci which are required for dco localization to photoreceptor nuclei. It is possible that the accumulation into foci results in the dissociation of the protein from dco, thus allowing dco to interact with importins and microtubles for nuclear transport. By promoting nuclei localization and kinase activity of dco towards per, it is essential for regulating normal cycles of per nuclear accumulation in brain circadian neurons and thus is important for normal circadian behavior. Essential for regulating the establishment of planar cell polarity in the wing. Forms a complex with Ankrd49 which likely functions in the regulation of planar polarity by promoting the activity of dco during planar polarity establishment. Within the complex, directly promotes dco activity in regulating phosphorylation and asymmetric localization of core planar polarity proteins such as dsh. The polypeptide is Protein Bride of doubletime (Drosophila melanogaster (Fruit fly)).